The primary structure comprises 494 residues: Glutamate--tRNA ligase (494 aa).

Residues Pro10–Thr20 carry the 'HIGH' region motif. Zn(2+)-binding residues include Cys107, Cys109, Cys134, and His136. A 'KMSKS' region motif is present at residues Lys251–Arg255. ATP is bound at residue Lys254.

The protein belongs to the class-I aminoacyl-tRNA synthetase family. Glutamate--tRNA ligase type 1 subfamily. In terms of assembly, monomer. It depends on Zn(2+) as a cofactor.

It localises to the cytoplasm. The catalysed reaction is tRNA(Glu) + L-glutamate + ATP = L-glutamyl-tRNA(Glu) + AMP + diphosphate. In terms of biological role, catalyzes the attachment of glutamate to tRNA(Glu) in a two-step reaction: glutamate is first activated by ATP to form Glu-AMP and then transferred to the acceptor end of tRNA(Glu). The sequence is that of Glutamate--tRNA ligase from Pseudomonas aeruginosa (strain UCBPP-PA14).